Consider the following 298-residue polypeptide: Ankyrin repeat domain-containing protein 29 (298 aa).

ANK repeat units follow at residues 8 to 38 (PLANAVFWAARKGNLALLQLLLNSGRVDVDC), 42 to 71 (YGTTALMVASYSGHYECVRELIMQGADINL), 75 to 104 (TGSTALFFASQQGHNEIVKLLFEFGASTEF), 108 to 137 (DGGTALCAACQFGHSRVVDTLLKNGANVHD), 141 to 170 (DGATALFLASQEGHVNLIRQLLSSGAKVNQ), 174 to 203 (DGTAPLWMAAQMGHSEVVKVLLLRGADRDA), 207 to 236 (DGSTALFKAAHKGHCSVMEELLKFSPSLGI), and 239 to 268 (NGSTALHAAVMGGSLKAVDLLLKANADPAL).

This is Ankyrin repeat domain-containing protein 29 (ankrd29) from Danio rerio (Zebrafish).